A 462-amino-acid polypeptide reads, in one-letter code: Cysteine--tRNA ligase (462 aa).

Cys-27 contributes to the Zn(2+) binding site. A 'HIGH' region motif is present at residues 29–39 (PTVYDLAHIGN). Zn(2+)-binding residues include Cys-211, His-236, and Glu-240. The 'KMSKS' region signature appears at 270 to 274 (KMSKS). Residue Lys-273 participates in ATP binding.

Belongs to the class-I aminoacyl-tRNA synthetase family. Monomer. Zn(2+) serves as cofactor.

Its subcellular location is the cytoplasm. It catalyses the reaction tRNA(Cys) + L-cysteine + ATP = L-cysteinyl-tRNA(Cys) + AMP + diphosphate. In Anaplasma phagocytophilum (strain HZ), this protein is Cysteine--tRNA ligase.